Consider the following 277-residue polypeptide: Ras suppressor protein 1 (277 aa).

Positions 1–24 are disordered; the sequence is MSKSLKKLVEESREKNQPEVDMSD. An N-acetylserine modification is found at serine 2. Over residues 7 to 24 the composition is skewed to basic and acidic residues; the sequence is KLVEESREKNQPEVDMSD. LRR repeat units follow at residues 41–63, 64–85, 87–109, 110–133, 135–156, 158–179, and 181–202; these read HITQLVLSHNKLTMVPPNIAELK, NLEVLNFFNNQIEELPTQISSL, KLKHLNLGMNRLNTLPRGFGSLP, ALEVLDLTYNNLSENSLPGNFFYL, TLRALYLSDNDFEILPPDIGKL, KLQILSLRDNDLISLPKEIGEL, and QLKELHIQGNRLTVLPPELGNL. The interval 250–277 is disordered; the sequence is MQANPEPPKKNNDKSKKISRKPLAAKNR. Basic and acidic residues predominate over residues 256–265; that stretch reads PPKKNNDKSK.

Potentially plays a role in the Ras signal transduction pathway. Capable of suppressing v-Ras transformation in vitro. This chain is Ras suppressor protein 1 (RSU1), found in Homo sapiens (Human).